A 403-amino-acid polypeptide reads, in one-letter code: Bifunctional enzyme IspD/IspF (403 aa).

A 2-C-methyl-D-erythritol 4-phosphate cytidylyltransferase region spans residues 1-234 (MPTSKRTAAI…ARLAAMLGDI (234 aa)). Residues 235–403 (RTGTGYDVHA…SDQEDKGWST (169 aa)) are 2-C-methyl-D-erythritol 2,4-cyclodiphosphate synthase. A divalent metal cation-binding residues include Asp-241 and His-243. Residues 241–243 (DVH) and 267–268 (HS) contribute to the 4-CDP-2-C-methyl-D-erythritol 2-phosphate site. An a divalent metal cation-binding site is contributed by His-275. Residues 289–291 (DIG), 365–368 (TTSE), Phe-372, and Arg-375 contribute to the 4-CDP-2-C-methyl-D-erythritol 2-phosphate site.

In the N-terminal section; belongs to the IspD/TarI cytidylyltransferase family. IspD subfamily. The protein in the C-terminal section; belongs to the IspF family. A divalent metal cation serves as cofactor.

The enzyme catalyses 2-C-methyl-D-erythritol 4-phosphate + CTP + H(+) = 4-CDP-2-C-methyl-D-erythritol + diphosphate. It carries out the reaction 4-CDP-2-C-methyl-D-erythritol 2-phosphate = 2-C-methyl-D-erythritol 2,4-cyclic diphosphate + CMP. It functions in the pathway isoprenoid biosynthesis; isopentenyl diphosphate biosynthesis via DXP pathway; isopentenyl diphosphate from 1-deoxy-D-xylulose 5-phosphate: step 2/6. The protein operates within isoprenoid biosynthesis; isopentenyl diphosphate biosynthesis via DXP pathway; isopentenyl diphosphate from 1-deoxy-D-xylulose 5-phosphate: step 4/6. In terms of biological role, bifunctional enzyme that catalyzes the formation of 4-diphosphocytidyl-2-C-methyl-D-erythritol from CTP and 2-C-methyl-D-erythritol 4-phosphate (MEP) (IspD), and catalyzes the conversion of 4-diphosphocytidyl-2-C-methyl-D-erythritol 2-phosphate (CDP-ME2P) to 2-C-methyl-D-erythritol 2,4-cyclodiphosphate (ME-CPP) with a corresponding release of cytidine 5-monophosphate (CMP) (IspF). This Nitrobacter hamburgensis (strain DSM 10229 / NCIMB 13809 / X14) protein is Bifunctional enzyme IspD/IspF.